A 205-amino-acid chain; its full sequence is SCO2-like protein RF_0960 (205 aa).

Cu cation contacts are provided by Cys-82, Cys-86, and His-172.

Belongs to the SCO1/2 family.

The chain is SCO2-like protein RF_0960 from Rickettsia felis (strain ATCC VR-1525 / URRWXCal2) (Rickettsia azadi).